Reading from the N-terminus, the 669-residue chain is Coagulation factor XIII B chain (669 aa).

A signal peptide spans 1–21; the sequence is MMTLRHLPFILLLILSGELYA. 10 consecutive Sushi domains span residues 25 to 89, 90 to 149, 152 to 211, 212 to 270, 273 to 330, 335 to 392, 395 to 453, 454 to 517, 523 to 581, and 582 to 648; these read QCDF…PRCY, KKCL…SCRK, ETCL…QCNK, LMCS…ICEG, NRCP…KCIE, VACE…ECVE, ENCK…VCLE, PCTI…PMCI, GMCA…SCLE, and PCTL…PKCT. 20 disulfide bridges follow: Cys-26–Cys-77, Cys-60–Cys-88, Cys-92–Cys-136, Cys-119–Cys-147, Cys-154–Cys-198, Cys-181–Cys-209, Cys-214–Cys-256, Cys-242–Cys-268, Cys-275–Cys-317, Cys-303–Cys-328, Cys-337–Cys-379, Cys-365–Cys-390, Cys-397–Cys-440, Cys-426–Cys-451, Cys-455–Cys-506, Cys-487–Cys-516, Cys-525–Cys-568, Cys-554–Cys-579, Cys-583–Cys-637, and Cys-617–Cys-647. N-linked (GlcNAc...) asparagine glycosylation is present at Asn-163. An N-linked (GlcNAc...) asparagine glycan is attached at Asn-546.

In terms of assembly, tetramer of two A chains (F13A1) and two B (F13B) chains. As to expression, predominantly expressed in liver and kidney.

Its subcellular location is the secreted. Its function is as follows. The B chain of factor XIII is not catalytically active, but is thought to stabilize the A subunits and regulate the rate of transglutaminase formation by thrombin. The sequence is that of Coagulation factor XIII B chain (F13b) from Mus musculus (Mouse).